The chain runs to 146 residues: VHLTGEEKSAVTTLWGKVNVEEVGGEALGRLLVVYPWTQRFFESFGDLSSPDAVMNNPKVKAHGKKVLGAFSDGLAHLDNLKGTFAQLSELHCDKLHVDPENFRLLGNVLVCVLAHHFGKEFTPQVQAAYQKVVAGVANALAHKYH.

Valine 1 carries the post-translational modification N-acetylvaline. In terms of domain architecture, Globin spans histidine 2–histidine 146. Threonine 12 bears the Phosphothreonine mark. The residue at position 44 (serine 44) is a Phosphoserine. Lysine 59 carries the post-translational modification N6-acetyllysine. Residue histidine 63 participates in heme b binding. Lysine 82 carries the post-translational modification N6-acetyllysine. Heme b is bound at residue histidine 92. Cysteine 93 bears the S-nitrosocysteine mark. N6-acetyllysine is present on lysine 144.

Belongs to the globin family. Heterotetramer of two alpha chains and two beta chains. In terms of tissue distribution, red blood cells.

Its function is as follows. Involved in oxygen transport from the lung to the various peripheral tissues. This chain is Hemoglobin subunit beta (HBB), found in Saguinus oedipus (Cotton-top tamarin).